The following is a 633-amino-acid chain: Threonine--tRNA ligase (633 aa).

Residues 1 to 143 (MRALFLHSNR…SRTIKPKKVK (143 aa)) form an editing domain region. Catalytic regions lie at residues 220–515 (NPLN…PVLP) and 221–515 (PLND…PVLP). Cysteine 314, histidine 365, and histidine 488 together coordinate Zn(2+).

The protein belongs to the class-II aminoacyl-tRNA synthetase family. Homodimer. Zn(2+) serves as cofactor.

The protein localises to the cytoplasm. The enzyme catalyses tRNA(Thr) + L-threonine + ATP = L-threonyl-tRNA(Thr) + AMP + diphosphate + H(+). Catalyzes the attachment of threonine to tRNA(Thr) in a two-step reaction: L-threonine is first activated by ATP to form Thr-AMP and then transferred to the acceptor end of tRNA(Thr). Also edits incorrectly charged L-seryl-tRNA(Thr). The polypeptide is Threonine--tRNA ligase (Nanoarchaeum equitans (strain Kin4-M)).